Here is a 176-residue protein sequence, read N- to C-terminus: ATP-dependent protease subunit HslV (176 aa).

Residue T5 is part of the active site. S161, C164, and T167 together coordinate Na(+).

It belongs to the peptidase T1B family. HslV subfamily. In terms of assembly, a double ring-shaped homohexamer of HslV is capped on each side by a ring-shaped HslU homohexamer. The assembly of the HslU/HslV complex is dependent on binding of ATP.

The protein resides in the cytoplasm. It catalyses the reaction ATP-dependent cleavage of peptide bonds with broad specificity.. Allosterically activated by HslU binding. Its function is as follows. Protease subunit of a proteasome-like degradation complex believed to be a general protein degrading machinery. This chain is ATP-dependent protease subunit HslV, found in Caldanaerobacter subterraneus subsp. tengcongensis (strain DSM 15242 / JCM 11007 / NBRC 100824 / MB4) (Thermoanaerobacter tengcongensis).